The sequence spans 93 residues: Pyrimidine/purine nucleoside phosphorylase (93 aa).

It belongs to the nucleoside phosphorylase PpnP family.

The catalysed reaction is a purine D-ribonucleoside + phosphate = a purine nucleobase + alpha-D-ribose 1-phosphate. It catalyses the reaction adenosine + phosphate = alpha-D-ribose 1-phosphate + adenine. The enzyme catalyses cytidine + phosphate = cytosine + alpha-D-ribose 1-phosphate. It carries out the reaction guanosine + phosphate = alpha-D-ribose 1-phosphate + guanine. The catalysed reaction is inosine + phosphate = alpha-D-ribose 1-phosphate + hypoxanthine. It catalyses the reaction thymidine + phosphate = 2-deoxy-alpha-D-ribose 1-phosphate + thymine. The enzyme catalyses uridine + phosphate = alpha-D-ribose 1-phosphate + uracil. It carries out the reaction xanthosine + phosphate = alpha-D-ribose 1-phosphate + xanthine. In terms of biological role, catalyzes the phosphorolysis of diverse nucleosides, yielding D-ribose 1-phosphate and the respective free bases. Can use uridine, adenosine, guanosine, cytidine, thymidine, inosine and xanthosine as substrates. Also catalyzes the reverse reactions. This chain is Pyrimidine/purine nucleoside phosphorylase, found in Photobacterium profundum (strain SS9).